Reading from the N-terminus, the 210-residue chain is MKFLDQEKRRQLLNERHSCKMFDSHYEFSSTELEEIAEIARLSPSSYNTQPWHFVMVTDKDLKKQIAAHSYFNEEMIKSASALMVVCSLRPSELLPHGHYMQNLYPESYKVRVIPSFAQMLGVRFNHSMQRLESYILEQCYIAVGQICMGVSLMGLDSCIIGGFDPLKVGEVLEERINKPKIACLIALGKRVAEASQKSRKSKVDAITWL.

NADP(+) is bound at residue 150–155; it reads GVSLMG.

Belongs to the nitroreductase family.

Functionally, reduction of a variety of nitroaromatic compounds using NADPH as source of reducing equivalents; two electrons are transferred. Capable of reducing metronidazole; inactive RdxA renders the bacterium resistant to this compound. The reduction of metronidazole generates hydroxylamine, a potent mutagen and bactericide. In Helicobacter pylori (strain ATCC 700392 / 26695) (Campylobacter pylori), this protein is Oxygen-insensitive NADPH nitroreductase (rdxA).